The sequence spans 525 residues: GMP synthase [glutamine-hydrolyzing] (525 aa).

Residues 9–207 (RILILDFGSQ…VLDICQCEKL (199 aa)) enclose the Glutamine amidotransferase type-1 domain. Cys-86 functions as the Nucleophile in the catalytic mechanism. Catalysis depends on residues His-181 and Glu-183. One can recognise a GMPS ATP-PPase domain in the interval 208-400 (WTPDAIIEDA…LGLPYDMLYR (193 aa)). 235 to 241 (SGGVDSS) contributes to the ATP binding site.

In terms of assembly, homodimer.

The enzyme catalyses XMP + L-glutamine + ATP + H2O = GMP + L-glutamate + AMP + diphosphate + 2 H(+). The protein operates within purine metabolism; GMP biosynthesis; GMP from XMP (L-Gln route): step 1/1. Its function is as follows. Catalyzes the synthesis of GMP from XMP. This chain is GMP synthase [glutamine-hydrolyzing], found in Pseudoalteromonas atlantica (strain T6c / ATCC BAA-1087).